A 209-amino-acid polypeptide reads, in one-letter code: D-aminoacyl-tRNA deacylase 1 (209 aa).

Positions 4, 6, and 28 each coordinate Mg(2+). Residues 139 to 140 carry the Gly-cisPro motif, important for rejection of L-amino acids motif; the sequence is GP. The tract at residues 142–209 is disordered; that stretch reads TIELESPAPG…EGDVSSEREP (68 aa). Composition is skewed to basic and acidic residues over residues 159-170 and 181-194; these read QLSKLEKQQQRK and SSKERNTPRKEDRS. A phosphoserine mark is found at serine 197, serine 204, and serine 205.

This sequence belongs to the DTD family. As to quaternary structure, homodimer. Interacts with CDC45 and TOPBP1. Preferentially phosphorylated in cells arrested early in S phase. Phosphorylation in the C-terminus weakens the interaction with CDC45. Expressed in many adult and fetal tissues. Highest levels in testis, ovary, spleen and in adult and fetal brain.

The protein localises to the nucleus. It localises to the cytoplasm. It catalyses the reaction glycyl-tRNA(Ala) + H2O = tRNA(Ala) + glycine + H(+). The enzyme catalyses a D-aminoacyl-tRNA + H2O = a tRNA + a D-alpha-amino acid + H(+). Possible ATPase involved in DNA replication, may facilitate loading of CDC45 onto pre-replication complexes. Functionally, an aminoacyl-tRNA editing enzyme that deacylates mischarged D-aminoacyl-tRNAs. Also deacylates mischarged glycyl-tRNA(Ala), protecting cells against glycine mischarging by AlaRS. Acts via tRNA-based rather than protein-based catalysis; rejects L-amino acids rather than detecting D-amino acids in the active site. By recycling D-aminoacyl-tRNA to D-amino acids and free tRNA molecules, this enzyme counteracts the toxicity associated with the formation of D-aminoacyl-tRNA entities in vivo and helps enforce protein L-homochirality. This is D-aminoacyl-tRNA deacylase 1 (DTD1) from Homo sapiens (Human).